Reading from the N-terminus, the 240-residue chain is 2,3-bisphosphoglycerate-dependent phosphoglycerate mutase 2 (240 aa).

Residues 8 to 15, 21 to 22, Arg-60, 87 to 90, Lys-98, 114 to 115, and 183 to 184 contribute to the substrate site; these read RHGQSEWN, TG, ERHY, RR, and GN. His-9 (tele-phosphohistidine intermediate) is an active-site residue. Glu-87 (proton donor/acceptor) is an active-site residue.

Belongs to the phosphoglycerate mutase family. BPG-dependent PGAM subfamily.

The enzyme catalyses (2R)-2-phosphoglycerate = (2R)-3-phosphoglycerate. It participates in carbohydrate degradation; glycolysis; pyruvate from D-glyceraldehyde 3-phosphate: step 3/5. Catalyzes the interconversion of 2-phosphoglycerate and 3-phosphoglycerate. In Bacillus cereus (strain ATCC 10987 / NRS 248), this protein is 2,3-bisphosphoglycerate-dependent phosphoglycerate mutase 2.